The chain runs to 120 residues: Large ribosomal subunit protein uL18 (120 aa).

The interval M1 to G22 is disordered. The span at S8–V20 shows a compositional bias: basic residues.

This sequence belongs to the universal ribosomal protein uL18 family. As to quaternary structure, part of the 50S ribosomal subunit; part of the 5S rRNA/L5/L18/L25 subcomplex. Contacts the 5S and 23S rRNAs.

In terms of biological role, this is one of the proteins that bind and probably mediate the attachment of the 5S RNA into the large ribosomal subunit, where it forms part of the central protuberance. In Crocosphaera subtropica (strain ATCC 51142 / BH68) (Cyanothece sp. (strain ATCC 51142)), this protein is Large ribosomal subunit protein uL18.